A 476-amino-acid polypeptide reads, in one-letter code: Protein transport protein Sec61 subunit alpha (476 aa).

The Cytoplasmic portion of the chain corresponds to 2-33; that stretch reads GIKFLEFIKPFCAVLPEIQKPERKIQFREKVL. The helical transmembrane segment at 34 to 53 threads the bilayer; it reads WTAITLFIFLVCCQIPLFGI. Over 54–76 the chain is Lumenal; it reads MSSDSADPFYWMRVILASNRGTL. The helical transmembrane segment at 77–96 threads the bilayer; the sequence is MELGIAPIVTSGLIMQLLAG. Topologically, residues 97–117 are cytoplasmic; sequence AKIIEVGDTPKDRALFNGAQK. A helical transmembrane segment spans residues 118–138; that stretch reads LFGMIITIGQAIVYVMTGMYG. Over 139 to 144 the chain is Lumenal; it reads DPSEMG. Residues 145-165 traverse the membrane as a helical segment; it reads AGICLLIIIQLFVAGLIVLLL. Over 166-172 the chain is Cytoplasmic; that stretch reads DELLQKG. Residues 173–193 traverse the membrane as a helical segment; sequence YGLGSGISLFIATNICETIVW. Residues 194 to 240 lie on the Lumenal side of the membrane; sequence KAFGPTTVNTGRGTEFEGAIIALFHLLATRTDKVRALREAFYRQNLP. The chain crosses the membrane as a helical span at residues 241-261; that stretch reads NLMNLIATVFVFAVVIYFQGF. At 262–288 the chain is on the cytoplasmic side; the sequence is RVDLPIKSARYRGQYNTYPIKLFYTSN. The chain crosses the membrane as a helical span at residues 289–309; sequence IPIILQSALVSNLYVISQMLS. The Lumenal segment spans residues 310–354; sequence TRFSGNFLVNLLGTWSDATTSGPARAYPVAGLCYYLSPPESFGSV. A helical transmembrane segment spans residues 355-375; the sequence is LDDPVHAVIYIVFMLGSCAFF. At 376 to 420 the chain is on the cytoplasmic side; it reads SKTWIEVSGSSAKDVAKQLKEQQMVMRGHRETSMVHELNRYIPTA. Residues 421-441 traverse the membrane as a helical segment; sequence AAFGGLCIGGLSVMADFLGAI. At 442–445 the chain is on the lumenal side; the sequence is GSGT. Residues 446-462 form a helical membrane-spanning segment; sequence GILLAVTIIYQYFEIFV. Residues 463-476 lie on the Cytoplasmic side of the membrane; it reads KEQSEVGSMGALLF.

The protein belongs to the SecY/SEC61-alpha family. As to quaternary structure, the SEC61 channel-forming translocon complex consists of channel-forming core components SEC61A1, SEC61B and SEC61G and different auxiliary components such as SEC62 and SEC63. The SEC61 channel associates with the multi-pass translocon (MPT) complex.

It is found in the endoplasmic reticulum membrane. Its function is as follows. Component of SEC61 channel-forming translocon complex that mediates transport of signal peptide-containing precursor polypeptides across the endoplasmic reticulum (ER). Forms a ribosome receptor and a gated pore in the ER membrane, both functions required for cotranslational translocation of nascent polypeptides. May cooperate with auxiliary protein SEC62, SEC63 and HSPA5/BiP to enable post-translational transport of small presecretory proteins. The SEC61 channel is also involved in ER membrane insertion of transmembrane proteins: it mediates membrane insertion of the first few transmembrane segments of proteins, while insertion of subsequent transmembrane regions of multi-pass membrane proteins is mediated by the multi-pass translocon (MPT) complex. This is Protein transport protein Sec61 subunit alpha (sec61a) from Bovichtus variegatus (Thornfish).